Here is a 230-residue protein sequence, read N- to C-terminus: NAD(P)H-hydrate epimerase (230 aa).

Residues 11 to 218 (AIDVDQELFT…ALQRKYGLNL (208 aa)) enclose the YjeF N-terminal domain. 61–65 (NNGGD) lines the (6S)-NADPHX pocket. Residues Asn62 and Asp126 each coordinate K(+). Residues 130-136 (GFSFKPP) and Asp159 each bind (6S)-NADPHX. K(+) is bound at residue Ser162.

It belongs to the NnrE/AIBP family. It depends on K(+) as a cofactor.

It carries out the reaction (6R)-NADHX = (6S)-NADHX. The catalysed reaction is (6R)-NADPHX = (6S)-NADPHX. Its function is as follows. Catalyzes the epimerization of the S- and R-forms of NAD(P)HX, a damaged form of NAD(P)H that is a result of enzymatic or heat-dependent hydration. This is a prerequisite for the S-specific NAD(P)H-hydrate dehydratase to allow the repair of both epimers of NAD(P)HX. The sequence is that of NAD(P)H-hydrate epimerase from Drosophila yakuba (Fruit fly).